Reading from the N-terminus, the 200-residue chain is MSKYAGIVLAGGMSSRFGEPKALAIWKGTTFVEHIVKVMGNTLQDIVVISHTDIKERVEQFVQVPVIEDIPHYKGNGPLAGIVSGMEYIEADWYAIMPCDAPNVSHEWFTILLEQTNNEYDAVVPIINGRKQPLLAAYHNRVKEKIYALLQEEKRSMGQLLSQCNVKYVSGEDVQANADWFINVNTKEEYGQAQKDLSNE.

GTP is bound by residues 9-11, lysine 21, aspartate 69, and aspartate 100; that span reads LAG. Aspartate 100 serves as a coordination point for Mg(2+).

It belongs to the MobA family. Mg(2+) serves as cofactor.

It localises to the cytoplasm. It catalyses the reaction Mo-molybdopterin + GTP + H(+) = Mo-molybdopterin guanine dinucleotide + diphosphate. Transfers a GMP moiety from GTP to Mo-molybdopterin (Mo-MPT) cofactor (Moco or molybdenum cofactor) to form Mo-molybdopterin guanine dinucleotide (Mo-MGD) cofactor. The chain is Probable molybdenum cofactor guanylyltransferase from Bacillus cereus (strain B4264).